The following is a 144-amino-acid chain: Probable DNA-directed RNA polymerases I and III subunit RPAC2 (144 aa).

The disordered stretch occupies residues 14-47 (KVEAETMEVDEQPQETPQVDDEEDLNVPSKKKME). Over residues 18-38 (ETMEVDEQPQETPQVDDEEDL) the composition is skewed to acidic residues.

This sequence belongs to the archaeal Rpo11/eukaryotic RPB11/RPC19 RNA polymerase subunit family. As to quaternary structure, component of the RNA polymerase I (Pol I) and RNA polymerase III (Pol III) complexes consisting of at least 13 and 17 subunits, respectively.

It is found in the nucleus. Its function is as follows. DNA-dependent RNA polymerase catalyzes the transcription of DNA into RNA using the four ribonucleoside triphosphates as substrates. Common core component of RNA polymerases I and III which synthesize ribosomal RNA precursors and small RNAs, such as 5S rRNA and tRNAs, respectively. This chain is Probable DNA-directed RNA polymerases I and III subunit RPAC2 (rpac-19), found in Caenorhabditis elegans.